The chain runs to 598 residues: Sulfoacetaldehyde acetyltransferase (598 aa).

Belongs to the TPP enzyme family. Homotetramer. It depends on Mg(2+) as a cofactor. The cofactor is thiamine diphosphate.

It is found in the cytoplasm. It catalyses the reaction acetyl phosphate + sulfite + H(+) = sulfoacetaldehyde + phosphate. It functions in the pathway organosulfur degradation; taurine degradation via aerobic pathway; acetyl phosphate and sulfite from taurine: step 2/2. In Castellaniella defragrans (Alcaligenes defragrans), this protein is Sulfoacetaldehyde acetyltransferase.